The following is a 450-amino-acid chain: Tubulin alpha-2 chain (450 aa).

Residue Gln11 coordinates GTP. At Lys40 the chain carries N6-acetyllysine. Residues Glu71, Gly144, Thr145, Thr179, Asn206, and Asn228 each contribute to the GTP site. A Mg(2+)-binding site is contributed by Glu71. Glu254 is a catalytic residue.

This sequence belongs to the tubulin family. Dimer of alpha and beta chains. A typical microtubule is a hollow water-filled tube with an outer diameter of 25 nm and an inner diameter of 15 nM. Alpha-beta heterodimers associate head-to-tail to form protofilaments running lengthwise along the microtubule wall with the beta-tubulin subunit facing the microtubule plus end conferring a structural polarity. Microtubules usually have 13 protofilaments but different protofilament numbers can be found in some organisms and specialized cells. It depends on Mg(2+) as a cofactor. In terms of processing, undergoes a tyrosination/detyrosination cycle, the cyclic removal and re-addition of a C-terminal tyrosine residue by the enzymes tubulin tyrosine carboxypeptidase (TTCP) and tubulin tyrosine ligase (TTL), respectively. Acetylation of alpha chains at Lys-40 stabilizes microtubules and affects affinity and processivity of microtubule motors. This modification has a role in multiple cellular functions, ranging from cell motility, cell cycle progression or cell differentiation to intracellular trafficking and signaling.

The protein localises to the cytoplasm. It localises to the cytoskeleton. The catalysed reaction is GTP + H2O = GDP + phosphate + H(+). Its function is as follows. Tubulin is the major constituent of microtubules, a cylinder consisting of laterally associated linear protofilaments composed of alpha- and beta-tubulin heterodimers. Microtubules grow by the addition of GTP-tubulin dimers to the microtubule end, where a stabilizing cap forms. Below the cap, tubulin dimers are in GDP-bound state, owing to GTPase activity of alpha-tubulin. The polypeptide is Tubulin alpha-2 chain (Gossypium hirsutum (Upland cotton)).